Reading from the N-terminus, the 342-residue chain is MLLLTLESSCDETSAAVVRDGRQVLSNVIASQIDVHALYGGVVPELASRKHMEAVAVVVDDALRQARVALGDIEGIAVTRGPGLVGALLVGLSMAKAMAMSLDIPLVGVHHMEGHILAPLLEQDVPFPYLALAVSGGHTHLYRVDGIGRYRIVGRTLDDAAGEAFDKVSKLLGLGYPGGAVIDRLAAEGNPKAFDFPRPLLKKPNFDFSFSGIKTALLYYAQSQKGPIEGDHLRDVAASFQQAVVEVLCKKTLRAARETGLQRIVVAGGVACNKGLRRMMGERSAKEGFQVFFPSPGLCADNAAMLGVAGDAYLAGGCTSDLDLNARSNWPLDQAGWPQPCR.

H111 and H115 together coordinate Fe cation. Residues 133–137, D166, G179, D183, and N273 each bind substrate; that span reads AVSGG. Residue D301 participates in Fe cation binding.

This sequence belongs to the KAE1 / TsaD family. Requires Fe(2+) as cofactor.

The protein resides in the cytoplasm. The enzyme catalyses L-threonylcarbamoyladenylate + adenosine(37) in tRNA = N(6)-L-threonylcarbamoyladenosine(37) in tRNA + AMP + H(+). Required for the formation of a threonylcarbamoyl group on adenosine at position 37 (t(6)A37) in tRNAs that read codons beginning with adenine. Is involved in the transfer of the threonylcarbamoyl moiety of threonylcarbamoyl-AMP (TC-AMP) to the N6 group of A37, together with TsaE and TsaB. TsaD likely plays a direct catalytic role in this reaction. The polypeptide is tRNA N6-adenosine threonylcarbamoyltransferase (Syntrophotalea carbinolica (strain DSM 2380 / NBRC 103641 / GraBd1) (Pelobacter carbinolicus)).